The following is a 191-amino-acid chain: Glucose-6-phosphate 1-dehydrogenase (191 aa).

Ala-2 is modified (N-acetylalanine). Ser-8 bears the Phosphoserine mark. The residue at position 10 (Thr-10) is a Phosphothreonine. NADP(+)-binding positions include 38–45 and Tyr-86; that span reads GASGDLAK. Asp-101 is a D-glucose 6-phosphate binding site. Catalysis depends on His-106, which acts as the Proton acceptor. Arg-163 is an NADP(+) binding site. Lys-173 is subject to N6-acetyllysine. Positions 179 and 185 each coordinate NADP(+). Tyr-179 bears the Phosphotyrosine mark.

This sequence belongs to the glucose-6-phosphate dehydrogenase family. In terms of assembly, homotetramer; dimer of dimers. Interacts with SIRT2; the interaction is enhanced by H(2)O(2) treatment. Forms a ternary complex with ALDOB and TP53; this interaction is direct. ALDOB stabilizes the complex inhibiting G6PD activity and keeping oxidative pentose phosphate metabolism in check. Post-translationally, acetylated by ELP3; acetylation inhibits its homodimerization and enzyme activity. Deacetylated by SIRT2; deacetylation stimulates its enzyme activity.

The protein localises to the cytoplasm. The protein resides in the cytosol. It is found in the membrane. The enzyme catalyses D-glucose 6-phosphate + NADP(+) = 6-phospho-D-glucono-1,5-lactone + NADPH + H(+). Its pathway is carbohydrate degradation; pentose phosphate pathway; D-ribulose 5-phosphate from D-glucose 6-phosphate (oxidative stage): step 1/3. In terms of biological role, cytosolic glucose-6-phosphate dehydrogenase that catalyzes the first and rate-limiting step of the oxidative branch within the pentose phosphate pathway/shunt, an alternative route to glycolysis for the dissimilation of carbohydrates and a major source of reducing power and metabolic intermediates for fatty acid and nucleic acid biosynthetic processes. The polypeptide is Glucose-6-phosphate 1-dehydrogenase (G6PD) (Didelphis virginiana (North American opossum)).